The following is a 276-amino-acid chain: Aquaporin-6 (276 aa).

The Cytoplasmic segment spans residues 1–22; that stretch reads MEPGLCNRAYLLVGGLWTAISK. Residues 23 to 43 traverse the membrane as a helical segment; the sequence is ALFAEFLATGLYVFFGVGSVL. Over 44–51 the chain is Extracellular; the sequence is PWPVALPS. A helical membrane pass occupies residues 52–70; that stretch reads VLQVAITFNLATATAVQIS. Residues 71-75 are Cytoplasmic-facing; it reads WKTSG. The segment at residues 76–85 is an intramembrane region (discontinuously helical); that stretch reads AHANPAVTLA. Positions 79–81 match the NPA 1 motif; sequence NPA. The Cytoplasmic segment spans residues 86–96; it reads YLVGSHISLPR. Residues 97–118 traverse the membrane as a helical segment; sequence AVAYIAAQLAGATVGAALLYGV. The Extracellular segment spans residues 119–138; the sequence is TPGGVRETLGVNVVHNSTST. Asn134 carries an N-linked (GlcNAc...) asparagine glycan. Residues 139–159 form a helical membrane-spanning segment; that stretch reads GQAVAVELVLTLQLVLCVFAS. Topologically, residues 160–165 are cytoplasmic; it reads MDSRQT. Residues 166-185 form a helical membrane-spanning segment; it reads LGSPAAMIGTSVALGHLIGI. Residues 186–189 lie on the Extracellular side of the membrane; that stretch reads YFTG. The discontinuously helical intramembrane region spans 190-202; it reads CSMNPARSFGPAV. Positions 193–195 match the NPA 2 motif; sequence NPA. The Extracellular segment spans residues 203 to 210; that stretch reads IVGKFAVH. Residues 211-231 form a helical membrane-spanning segment; that stretch reads WIFWVGPLTGAVLASLIYNFI. Residues 232 to 276 lie on the Cytoplasmic side of the membrane; that stretch reads LFPDTKTVAQRLAILVGTTKVEKVVDLEPQKKESQTNSEDTEVSV.

Belongs to the MIP/aquaporin (TC 1.A.8) family. In terms of assembly, homotetramer; each monomer provides an independent solute pore. In terms of processing, N-glycosylated. Kidney.

Its subcellular location is the cytoplasmic vesicle membrane. The catalysed reaction is nitrate(in) = nitrate(out). The enzyme catalyses iodide(out) = iodide(in). It catalyses the reaction bromide(in) = bromide(out). It carries out the reaction chloride(in) = chloride(out). The catalysed reaction is Na(+)(in) = Na(+)(out). The enzyme catalyses H2O(in) = H2O(out). It catalyses the reaction CO2(out) = CO2(in). It carries out the reaction NH4(+)(in) = NH4(+)(out). Activated by mercury and pH-gated, anion permeability is observed at pH 5.5 and increases markedly at pH 4.0. Selectivity for chloride increases at low pH. The water channel activity is stimulated by mercury by opposition to other aquaporins. Aquaporins form homotetrameric transmembrane channels, with each monomer independently mediating water transport across the plasma membrane along its osmotic gradient. Unlike classical aquaporins, AQP6 is an intracellular channel with selective anion permeability, particularly for nitrate, and exhibits very low water permeability. It may also facilitate the transport of gases, such as CO2 and NH4(+), as demonstrated in vitro. In Rattus norvegicus (Rat), this protein is Aquaporin-6.